Consider the following 220-residue polypeptide: Cytidylate kinase (220 aa).

9–17 contributes to the ATP binding site; it reads GPAASGKST.

This sequence belongs to the cytidylate kinase family. Type 1 subfamily.

Its subcellular location is the cytoplasm. It catalyses the reaction CMP + ATP = CDP + ADP. The catalysed reaction is dCMP + ATP = dCDP + ADP. This chain is Cytidylate kinase, found in Thermotoga maritima (strain ATCC 43589 / DSM 3109 / JCM 10099 / NBRC 100826 / MSB8).